A 917-amino-acid polypeptide reads, in one-letter code: Coiled-coil domain-containing protein 186 (917 aa).

Disordered regions lie at residues 1–52 (MKIR…SGDE), 97–118 (SCANTDTCPEDSGQIDDFPGGD), and 701–769 (TQRR…SVAV). Basic and acidic residues predominate over residues 33 to 44 (TTEKTSELRDDS). Residues 220–736 (RYLQQELTVK…TENGNHDKDI (517 aa)) adopt a coiled-coil conformation. Basic and acidic residues predominate over residues 722 to 736 (RKLEQTENGNHDKDI). The segment covering 737-748 (SSMGSRSSSSGS) has biased composition (low complexity). At S759 the chain carries Phosphoserine. Coiled coils occupy residues 778-822 (AMLI…IQSY) and 874-913 (KLQAVLEDTLLKNITLKENLQTLGTEIERLIKHQHELEQR).

As to expression, expressed in postnatal germ cells.

The polypeptide is Coiled-coil domain-containing protein 186 (Ccdc186) (Mus musculus (Mouse)).